The sequence spans 124 residues: Outer dense fiber protein 2 (124 aa).

Positions 13–124 form a coiled coil; the sequence is KEDSERLMEQ…EAIMEQLKEL (112 aa).

Belongs to the ODF2 family. Self-associates. Associates with microtubules and forms a fibrillar structure partially linked to the microtubule network. Interacts through its C-terminus with PLK1. Interacts with ODF1. Interacts with MARK4; the interaction is required for localization of ODF2 to centrioles. Interacts with TSSK4. Interacts with AKNA. Interacts with QRICH2. Interacts with CFAP58. Interacts with BBOF1. Interacts with CCDC38. Interacts with CCDC42. In terms of processing, tyrosine phosphorylated. In terms of tissue distribution, detected in sperm flagella (at protein level).

Its subcellular location is the cytoplasm. It is found in the cytoskeleton. The protein localises to the microtubule organizing center. It localises to the centrosome. The protein resides in the cell projection. Its subcellular location is the cilium. It is found in the centriole. The protein localises to the spindle pole. It localises to the flagellum. Its function is as follows. Seems to be a major component of sperm tail outer dense fibers (ODF). ODFs are filamentous structures located on the outside of the axoneme in the midpiece and principal piece of the mammalian sperm tail and may help to maintain the passive elastic structures and elastic recoil of the sperm tail. May have a modulating influence on sperm motility. Functions as a general scaffold protein that is specifically localized at the distal/subdistal appendages of mother centrioles. Component of the centrosome matrix required for the localization of PLK1 and NIN to the centrosomes. Required for the formation and/or maintenance of normal CETN1 assembly. This chain is Outer dense fiber protein 2, found in Mesocricetus auratus (Golden hamster).